The following is a 126-amino-acid chain: Small ribosomal subunit protein uS13 (126 aa).

Residues 98–126 (PVRGQSTKNNARTRKGRKKTVANKKKATK) are disordered. Residues 108-126 (ARTRKGRKKTVANKKKATK) show a composition bias toward basic residues.

This sequence belongs to the universal ribosomal protein uS13 family. As to quaternary structure, part of the 30S ribosomal subunit. Forms a loose heterodimer with protein S19. Forms two bridges to the 50S subunit in the 70S ribosome.

Functionally, located at the top of the head of the 30S subunit, it contacts several helices of the 16S rRNA. In the 70S ribosome it contacts the 23S rRNA (bridge B1a) and protein L5 of the 50S subunit (bridge B1b), connecting the 2 subunits; these bridges are implicated in subunit movement. Contacts the tRNAs in the A and P-sites. This chain is Small ribosomal subunit protein uS13, found in Phocaeicola vulgatus (strain ATCC 8482 / DSM 1447 / JCM 5826 / CCUG 4940 / NBRC 14291 / NCTC 11154) (Bacteroides vulgatus).